A 321-amino-acid chain; its full sequence is Cytochrome c biogenesis protein CcsA (321 aa).

Helical transmembrane passes span 9 to 29 (ILTH…LMTL), 44 to 64 (GIIS…IYSG), 71 to 91 (LYES…IPYL), 98 to 118 (LSVI…SCLS), 143 to 163 (MLLS…LLVI), 225 to 245 (IISL…VWAN), 260 to 280 (WAFI…NINF), and 288 to 308 (VASI…LLGI).

Belongs to the CcmF/CycK/Ccl1/NrfE/CcsA family. May interact with Ccs1.

The protein resides in the plastid. The protein localises to the chloroplast thylakoid membrane. Functionally, required during biogenesis of c-type cytochromes (cytochrome c6 and cytochrome f) at the step of heme attachment. This is Cytochrome c biogenesis protein CcsA from Dioscorea elephantipes (Elephant's foot yam).